We begin with the raw amino-acid sequence, 147 residues long: Large ribosomal subunit protein uL13 (147 aa).

It belongs to the universal ribosomal protein uL13 family. As to quaternary structure, part of the 50S ribosomal subunit.

This protein is one of the early assembly proteins of the 50S ribosomal subunit, although it is not seen to bind rRNA by itself. It is important during the early stages of 50S assembly. In Mycolicibacterium smegmatis (strain ATCC 700084 / mc(2)155) (Mycobacterium smegmatis), this protein is Large ribosomal subunit protein uL13.